A 601-amino-acid polypeptide reads, in one-letter code: MTSALYSGGGKSAGSLESALDEERLEVLRWMKEREEKKHRQLALQYDPIVRDYCLVKHGDSGYRMDSSLMTSLPHSRNPPIFEAIQGEQPSDIDTLNLKKVKSGPTSPSSIDRLSSPNAKAGDILASSLFSSGSPPDTTRRNSTSNLSSVSTNSDKSRTIGSNYNMLQSTKSTASQRRMSDSSTPSTTKSKEKIFSPKALSSPTQGASSNVTPESPPEKPIPSFVLSPPPVSATNEANKLSDIQTSSPSQDIPAKHLEPLHLNRSLSSSPSSEDSDLSLSSDSDDDEKKQPSKSEKTSSMSVSIKPPKIIRKGSKEQNRIAKEKASGAPLTKSKSHNDTSTEYDSNSLRRSRSNPAFANDDTVHPNTSFVSSNINNWYGSDLEELEQDVKTAKSMKVDIGPTRWIPTANRTIRCIRRGDFQTAASSSKRNCTYFLTLDLSSESLHAAEWAVGILLRNGDTLIIVDVIECDDPSARAVKDRMESEQLETLEKITKYILKLLSKTVLEVEVNIEVIHHEKAKHLIIEMIDYIEPSLVVMGSRGRSHLKGVLLGSFSNYLVNKSSVPVMVARKKLKKNKQRLGNQSRLANNLSDAIVDEVGRTP.

Residues Ser-127–His-364 form a disordered region. Over residues Ser-128–Asp-137 the composition is skewed to polar residues. A compositionally biased stretch (low complexity) spans Arg-141 to Ser-154. Polar residues-rich tracts occupy residues Thr-159–Arg-177, Ala-199–Pro-213, and Ser-232–Gln-250. Residues Ser-247 and Ser-281 each carry the phosphoserine modification. The span at Ser-265 to Ser-281 shows a compositional bias: low complexity. 2 stretches are compositionally biased toward basic and acidic residues: residues Asp-286 to Lys-296 and Gly-313 to Ala-325. Ser-335 carries the phosphoserine modification. Residues Asp-338 to Ala-356 show a composition bias toward polar residues.

This is an uncharacterized protein from Schizosaccharomyces pombe (strain 972 / ATCC 24843) (Fission yeast).